We begin with the raw amino-acid sequence, 329 residues long: Mitochondrial substrate carrier family protein W (329 aa).

The Mitochondrial intermembrane portion of the chain corresponds to 1–39 (MTTNNSNDNNKRYGIIKQQLQQQQQQHHQQHEQHSRLVE). Solcar repeat units follow at residues 34 to 119 (HSRL…CKEL), 133 to 221 (ESPL…FKSI), and 231 to 321 (LGIV…IKKF). Residues 40 to 60 (MTAGCGAGFMASLFTTPLDVI) form a helical membrane-spanning segment. The Mitochondrial matrix portion of the chain corresponds to 61–90 (KTTLQVDNSSNKTIMSTVKSILDRKGGVKN). A helical membrane pass occupies residues 91-111 (LYLGLKPTLVGQIPSWAVYFS). Topologically, residues 112-135 (TYTFCKELFTKENDKHSLLEKESP) are mitochondrial intermembrane. The chain crosses the membrane as a helical span at residues 136 to 156 (LIFMTSAIIAGAATSICTSPI). Residues 157–193 (WLIKTRFITQEMVGRQKKYRGIVHSMVSIYHEEGFRG) are Mitochondrial matrix-facing. A helical transmembrane segment spans residues 194-214 (LYKGLGPSLLGVLHVGVQFPL). The Mitochondrial intermembrane segment spans residues 215-230 (YEKFKSILKEKNKNKE). Residues 231 to 251 (LGIVEIMIASSVSKIIASVVA) traverse the membrane as a helical segment. The Mitochondrial matrix segment spans residues 252–296 (YPHEVLRARSQDSSPDSPNRTYRGNIIQMFKQIVREEGWRGLYRG). A helical transmembrane segment spans residues 297 to 315 (MGVNLLRVTPSCVITFTSY). Residues 316-329 (EYIKKFLSQNQNHF) are Mitochondrial intermembrane-facing.

This sequence belongs to the mitochondrial carrier (TC 2.A.29) family.

The protein localises to the mitochondrion inner membrane. Its function is as follows. Mitochondrial solute carriers shuttle metabolites, nucleotides, and cofactors through the mitochondrial inner membrane. The polypeptide is Mitochondrial substrate carrier family protein W (mcfW) (Dictyostelium discoideum (Social amoeba)).